Here is a 246-residue protein sequence, read N- to C-terminus: MTTMLLLLVVAALANGQLTILPHEESQICFLQPDNPGFDFDGNFTNIFRDYASVKISSFTYKAQDADIVEILNVDRDRSCTILAIYIADSTLDFNTFLQSENECVKYAASKKHYIKLPRDREYFALAKNLSFCPLNDDLIGIYCDTQLETTYFSVARSSNYDVTDIPEFTELGYVFHSNDHFYICERKSEGNWIDYQLFYQNDAPLGTVSQRVNWGNVWSNVKTVAQMVYKILDIFFGKRNIEPRA.

Residues 1–16 (MTTMLLLLVVAALANG) form the signal peptide.

It belongs to the rotavirus VP7 family. As to quaternary structure, homotrimer; disulfide-linked. 2 Ca(2+) ions bound at each subunit interface in the trimer hold the trimer together. Interacts with the intermediate capsid protein VP6. Interacts with the outer capsid protein VP5*.

The protein localises to the virion. Its subcellular location is the host endoplasmic reticulum lumen. Its function is as follows. Calcium-binding protein that interacts with rotavirus cell receptors once the initial attachment by VP4 has been achieved. Rotavirus attachment and entry into the host cell probably involves multiple sequential contacts between the outer capsid proteins VP4 and VP7, and the cell receptors. Following entry into the host cell, low intracellular or intravesicular Ca(2+) concentration probably causes the calcium-stabilized VP7 trimers to dissociate from the virion. This step is probably necessary for the membrane-disrupting entry step and the release of VP4, which is locked onto the virion by VP7. The chain is Outer capsid glycoprotein VP7 from Rotavirus B (isolate RVB/Rat/United States/IDIR/1984/G1P[X]) (RV-B).